A 530-amino-acid polypeptide reads, in one-letter code: Cytochrome P450 monooxygenase apf7 (530 aa).

Residues V6 to Y26 traverse the membrane as a helical segment. The N-linked (GlcNAc...) asparagine glycan is linked to N85. C464 is a heme binding site.

Belongs to the cytochrome P450 family. Requires heme as cofactor.

Its subcellular location is the membrane. The protein operates within secondary metabolite biosynthesis. Cytochrome P450 monooxygenase; part of the gene cluster that mediates the biosynthesis of the cyclic tetrapeptide apicidin F (APF). The non-ribosomal peptide synthetase apf1 incorporates four different amino acids to produce apicidin F: L-phenylalanine, D-pipecolic acid (D-pip), N-methoxy-L-tryptophan and L-2-aminooctanedioic acid. L-Phenylalanine is the only proteinogenic amino acid directly used by apf1. The 3 other apf1 substrates are non-proteinogenic and have to be modified by other enzymes of the cluster. Lysine is converted to delta-1-pyrroline-5-carboxylate (P5C) which is reduced to L-pipecolic acid (L-pip) by apf3. L-pip is epimerized to D-pip, probably by apf1 activity, prior to incorporation. L-Tryptophan is N-oxidyzed by one of the cytochrome P450 monooxygenases (apf7 or apf8), and further methylated at the hydroxy group by the O-methyltransferase apf6 to yield N-methoxy-L-tryptophan. The synthesis of the fourth apf1 substrate is more complex. The fatty acid synthase apf5 is involved in the synthesis of the octanoic acid backbone of L-2-aminooctanedioic acid by fixing one acetyl-CoA unit and three malonyl-CoA units. Then one of the cytochrome P450 monooxygenases (apf7 or apf8) may oxidize this backbone to 2-oxooctanoic acid. The aminotransferase apf4 is predicted to catalyze the exchange of the keto group with an amino group. The next step would be the oxidation of 2-aminooctanoic acid by one of the cytochrome P450 monooxygenases (apf7 or apf8). The last step is the oxidation of 2-amino-8-hydroxyoctanoic acid to 2-aminooctanedioic acid is catalyzed by the FAD-dependent monooxygenase apf9. The chain is Cytochrome P450 monooxygenase apf7 from Gibberella fujikuroi (strain CBS 195.34 / IMI 58289 / NRRL A-6831) (Bakanae and foot rot disease fungus).